A 999-amino-acid chain; its full sequence is Hypoxia up-regulated protein 1 (999 aa).

An N-terminal signal peptide occupies residues 1–32 (MADKVRRQRPRRRVCWALVAVLLADLLALSDT). 3 N-linked (GlcNAc...) asparagine glycosylation sites follow: Asn-155, Asn-222, and Asn-515. Ser-567 is subject to Phosphoserine. The interval 578–694 (GNTISSLFGG…KKQKPARKRR (117 aa)) is disordered. N-linked (GlcNAc...) asparagine glycosylation occurs at Asn-596. 2 stretches are compositionally biased toward basic and acidic residues: residues 611–626 (GSKDEPGEQVELKEEA) and 641–672 (PKGDATPEGEKATEKENGDKSEAQKPSEKAEA). N-linked (GlcNAc...) asparagine glycosylation is found at Asn-830, Asn-862, and Asn-869. At Lys-883 the chain carries N6-acetyllysine. Positions 909 to 999 (AKFTKPRPRP…QKRPLKNDEL (91 aa)) are disordered. N-linked (GlcNAc...) asparagine glycosylation is found at Asn-922 and Asn-931. The short motif at 996–999 (NDEL) is the Prevents secretion from ER element.

The protein belongs to the heat shock protein 70 family. Part of a large chaperone multiprotein complex comprising DNAJB11, HSP90B1, HSPA5, HYOU, PDIA2, PDIA4, PDIA6, PPIB, SDF2L1, UGGT1 and very small amounts of ERP29, but not, or at very low levels, CALR nor CANX. As to expression, highly expressed in tissues that contain well-developed endoplasmic reticulum and synthesize large amounts of secretory proteins. Highly expressed in liver and pancreas and lower expression in brain and kidney. Also expressed in macrophages within aortic atherosclerotic plaques, and in breast cancers.

It is found in the endoplasmic reticulum lumen. In terms of biological role, has a pivotal role in cytoprotective cellular mechanisms triggered by oxygen deprivation. Promotes HSPA5/BiP-mediated ATP nucleotide exchange and thereby activates the unfolded protein response (UPR) pathway in the presence of endoplasmic reticulum stress. May play a role as a molecular chaperone and participate in protein folding. This chain is Hypoxia up-regulated protein 1 (HYOU1), found in Homo sapiens (Human).